Here is a 174-residue protein sequence, read N- to C-terminus: Transmembrane protein 208 (174 aa).

The next 3 helical transmembrane spans lie at 30-50 (NMAIGCAAPALLLSFLVFEVT), 54-74 (VFMHILSLLILGSSYQFMAFM), and 111-131 (GTLLLALISNYFWLVLLLAPI). The segment at 151–174 (AQDDNPQVDEKKQKKMDRRMRRMR) is disordered. Over residues 163-174 (QKKMDRRMRRMR) the composition is skewed to basic residues.

It belongs to the TMEM208 family. In terms of assembly, interacts with fz. Expressed in the brain.

It is found in the endoplasmic reticulum membrane. Functionally, may play an important role during development and helps to maintain proper levels of Fz. In Drosophila melanogaster (Fruit fly), this protein is Transmembrane protein 208.